The chain runs to 360 residues: Glyceraldehyde-3-phosphate dehydrogenase (360 aa).

Residues 13-14, Asp-35, and Arg-82 each bind NAD(+); that span reads RI. Residues 153–155, Thr-184, 213–214, and Arg-236 each bind D-glyceraldehyde 3-phosphate; these read SCT and TG. The active-site Nucleophile is Cys-154. Residue Asn-318 participates in NAD(+) binding.

Belongs to the glyceraldehyde-3-phosphate dehydrogenase family. Homotetramer.

The catalysed reaction is D-glyceraldehyde 3-phosphate + phosphate + NAD(+) = (2R)-3-phospho-glyceroyl phosphate + NADH + H(+). It functions in the pathway carbohydrate degradation; glycolysis; pyruvate from D-glyceraldehyde 3-phosphate: step 1/5. Its function is as follows. Key enzyme in glycolysis that catalyzes the first step of the pathway by converting D-glyceraldehyde 3-phosphate (G3P) into 3-phospho-D-glyceroyl phosphate. Essential for the maintenance of cellular ATP levels and carbohydrate metabolism. In Atriplex nummularia (Old man saltbush), this protein is Glyceraldehyde-3-phosphate dehydrogenase.